The sequence spans 378 residues: Heme chaperone HemW (378 aa).

The region spanning 1–237 is the Radical SAM core domain; it reads MVKLPPLSLY…LTAAGYQQYE (237 aa). Y10 contacts S-adenosyl-L-methionine. [4Fe-4S] cluster contacts are provided by C16, C20, and C23. Residues G66, 67-68, E99, Q126, R138, and D163 each bind S-adenosyl-L-methionine; that span reads GT.

The protein belongs to the anaerobic coproporphyrinogen-III oxidase family. HemW subfamily. Binding of the [4Fe-4S] cofactor promotes dimerization. [4Fe-4S] cluster serves as cofactor.

The protein localises to the cytoplasm. Its function is as follows. Probably acts as a heme chaperone, transferring heme to the NarI subunit of the respiratory enzyme nitrate reductase; transfer may be stimulated by NADH. Binds one molecule of heme per monomer, possibly covalently. Heme binding is not affected by either [4Fe-4S] or S-adenosyl-L-methionine (SAM)-binding. Does not have coproporphyrinogen III dehydrogenase activity in vitro. Binds 1 [4Fe-4S] cluster. The cluster is coordinated with 3 cysteines and an exchangeable S-adenosyl-L-methionine. This chain is Heme chaperone HemW, found in Escherichia coli (strain K12).